A 506-amino-acid polypeptide reads, in one-letter code: FAD-linked oxidoreductase aurO (506 aa).

The 169-residue stretch at 92–260 folds into the FAD-binding PCMH-type domain; the sequence is ITAQPLAICR…AETDVRVYPM (169 aa).

Belongs to the oxygen-dependent FAD-linked oxidoreductase family. As to quaternary structure, might be part of an extracellular enzyme complex composed of GIP1, aurF, aurO and aurS. FAD serves as cofactor.

Its subcellular location is the secreted. The protein resides in the extracellular space. The protein operates within pigment biosynthesis. FAD-linked oxidoreductase; part of the gene cluster that mediates the biosynthesis of aurofusarin, a red mycelium pigment which is acting as a mycotoxin. The first step is performed by the polyketide synthase which condenses one acetyl-CoA and 6 malonyl-CoA units to form the first intermediate, the cyclic heptaketide and yellow pigment YWA1. The C2 hydroxyl group in the pyrone ring of YWA1 is probably formed during ring closure by an aldol-type cyclization reaction. The dehydratase aurZ then acts as the first tailoring enzyme in the aurofusarin biosynthetic pathway by converting YWA1 to nor-rubrofusarin. Nor-rubrofusarin is then methylated to rubrofusarin by the O-methyltransferase aurJ. Rubrofusarin is then transported across the plasma membrane by the rubrofusarin-specific pump aurT for further enzymatic processing by the extracellular complex composed of GIP1, aurF, aurO and aurS to yield aurofusarin. The protein is FAD-linked oxidoreductase aurO of Gibberella zeae (strain ATCC MYA-4620 / CBS 123657 / FGSC 9075 / NRRL 31084 / PH-1) (Wheat head blight fungus).